A 513-amino-acid chain; its full sequence is Histidine ammonia-lyase (513 aa).

A cross-link (5-imidazolinone (Ala-Gly)) is located at residues 144-146 (ASG). Ser-145 carries the 2,3-didehydroalanine (Ser) modification.

Belongs to the PAL/histidase family. Post-translationally, contains an active site 4-methylidene-imidazol-5-one (MIO), which is formed autocatalytically by cyclization and dehydration of residues Ala-Ser-Gly.

The protein localises to the cytoplasm. It catalyses the reaction L-histidine = trans-urocanate + NH4(+). The protein operates within amino-acid degradation; L-histidine degradation into L-glutamate; N-formimidoyl-L-glutamate from L-histidine: step 1/3. The polypeptide is Histidine ammonia-lyase (Streptococcus pyogenes serotype M3 (strain ATCC BAA-595 / MGAS315)).